A 428-amino-acid polypeptide reads, in one-letter code: Proline--tRNA ligase (428 aa).

The protein belongs to the class-II aminoacyl-tRNA synthetase family. ProS type 2 subfamily. In terms of assembly, homodimer.

Its subcellular location is the cytoplasm. The enzyme catalyses tRNA(Pro) + L-proline + ATP = L-prolyl-tRNA(Pro) + AMP + diphosphate. Its function is as follows. Catalyzes the attachment of proline to tRNA(Pro) in a two-step reaction: proline is first activated by ATP to form Pro-AMP and then transferred to the acceptor end of tRNA(Pro). This is Proline--tRNA ligase from Rickettsia typhi (strain ATCC VR-144 / Wilmington).